The following is a 644-amino-acid chain: Phosphomethylpyrimidine synthase (644 aa).

Substrate is bound by residues Asn-236, Met-265, Tyr-294, His-330, 350 to 352 (SRG), 391 to 394 (DGLR), and Glu-430. His-434 lines the Zn(2+) pocket. Position 457 (Tyr-457) interacts with substrate. His-498 contributes to the Zn(2+) binding site. 3 residues coordinate [4Fe-4S] cluster: Cys-578, Cys-581, and Cys-586.

This sequence belongs to the ThiC family. As to quaternary structure, homodimer. It depends on [4Fe-4S] cluster as a cofactor.

It carries out the reaction 5-amino-1-(5-phospho-beta-D-ribosyl)imidazole + S-adenosyl-L-methionine = 4-amino-2-methyl-5-(phosphooxymethyl)pyrimidine + CO + 5'-deoxyadenosine + formate + L-methionine + 3 H(+). It participates in cofactor biosynthesis; thiamine diphosphate biosynthesis. Catalyzes the synthesis of the hydroxymethylpyrimidine phosphate (HMP-P) moiety of thiamine from aminoimidazole ribotide (AIR) in a radical S-adenosyl-L-methionine (SAM)-dependent reaction. This is Phosphomethylpyrimidine synthase from Aliivibrio fischeri (strain ATCC 700601 / ES114) (Vibrio fischeri).